The following is a 94-amino-acid chain: Acylphosphatase (94 aa).

Residues 8–94 (ALHVIVKGRV…RGYTDFRIEV (87 aa)) form the Acylphosphatase-like domain. Residues R23 and N41 contribute to the active site.

Belongs to the acylphosphatase family.

It carries out the reaction an acyl phosphate + H2O = a carboxylate + phosphate + H(+). This chain is Acylphosphatase (acyP), found in Treponema denticola (strain ATCC 35405 / DSM 14222 / CIP 103919 / JCM 8153 / KCTC 15104).